Reading from the N-terminus, the 229-residue chain is Small ribosomal subunit protein uS3 (229 aa).

Residues 38 to 106 (IREYIENKLF…KVHINVMEVK (69 aa)) form the KH type-2 domain. Residues 208 to 217 (PEVDENEETK) show a composition bias toward acidic residues. Residues 208–229 (PEVDENEETKEENKEKSEEKSE) are disordered. Positions 218 to 229 (EENKEKSEEKSE) are enriched in basic and acidic residues.

The protein belongs to the universal ribosomal protein uS3 family. As to quaternary structure, part of the 30S ribosomal subunit. Forms a tight complex with proteins S10 and S14.

Binds the lower part of the 30S subunit head. Binds mRNA in the 70S ribosome, positioning it for translation. The polypeptide is Small ribosomal subunit protein uS3 (Natranaerobius thermophilus (strain ATCC BAA-1301 / DSM 18059 / JW/NM-WN-LF)).